Reading from the N-terminus, the 130-residue chain is MATPAKKTGSKKSKRNVPNGVVHIQSTFNNTIVSITDTNGEVVSWSSAGASGFKGARKGTPFAAQTAAEAAARRALEQGMRQIEVLVRGPGSGRETAIRALQVAGLEITLIRDVTPLPHNGCRRPKRRRV.

It belongs to the universal ribosomal protein uS11 family. In terms of assembly, part of the 30S ribosomal subunit. Interacts with proteins S7 and S18. Binds to IF-3.

In terms of biological role, located on the platform of the 30S subunit, it bridges several disparate RNA helices of the 16S rRNA. Forms part of the Shine-Dalgarno cleft in the 70S ribosome. The chain is Small ribosomal subunit protein uS11 from Prochlorococcus marinus (strain MIT 9211).